The primary structure comprises 510 residues: Xylose import ATP-binding protein XylG (510 aa).

ABC transporter domains follow at residues 5-242 (LEMK…VGRE) and 259-505 (LRVE…LRSE). ATP is bound at residue 37-44 (GENGSGKS).

Belongs to the ABC transporter superfamily. Xylose importer (TC 3.A.1.2.4) family. The complex is composed of two ATP-binding proteins (XylG), two transmembrane proteins (XylH) and a solute-binding protein (XylF).

It localises to the cell inner membrane. The catalysed reaction is D-xylose(out) + ATP + H2O = D-xylose(in) + ADP + phosphate + H(+). Part of the ABC transporter complex XylFGH involved in xylose import. Responsible for energy coupling to the transport system. The sequence is that of Xylose import ATP-binding protein XylG from Yersinia pestis.